Here is a 695-residue protein sequence, read N- to C-terminus: G-protein coupled receptor-associated protein LMBRD2 (695 aa).

Over methionine 1–alanine 5 the chain is Extracellular. The chain crosses the membrane as a helical span at residues leucine 6–leucine 21. At histidine 22–arginine 32 the chain is on the cytoplasmic side. A helical membrane pass occupies residues leucine 33–proline 53. The Extracellular segment spans residues leucine 54 to glycine 105. Asparagine 78 carries N-linked (GlcNAc...) asparagine glycosylation. A helical membrane pass occupies residues isoleucine 106 to leucine 126. Topologically, residues proline 127 to glutamate 150 are cytoplasmic. Residues asparagine 151–valine 171 form a helical membrane-spanning segment. The Extracellular segment spans residues asparagine 172–glycine 186. A helical membrane pass occupies residues isoleucine 187–valine 207. Over glutamate 208–lysine 387 the chain is Cytoplasmic. The stretch at tyrosine 227 to histidine 262 forms a coiled coil. Residues isoleucine 388–phenylalanine 408 form a helical membrane-spanning segment. The Extracellular segment spans residues serine 409–tyrosine 432. A helical transmembrane segment spans residues isoleucine 433–phenylalanine 453. The Cytoplasmic portion of the chain corresponds to arginine 454–serine 473. The helical transmembrane segment at leucine 474–glycine 494 threads the bilayer. Residues leucine 495–valine 521 are Extracellular-facing. A helical membrane pass occupies residues leucine 522–isoleucine 542. Residues alanine 543–valine 695 lie on the Cytoplasmic side of the membrane. A coiled-coil region spans residues leucine 571–tyrosine 603. Residues lysine 581–valine 628 form a disordered region. Positions arginine 588–asparagine 624 are enriched in basic and acidic residues. Serine 633 is modified (phosphoserine). The segment at alanine 662–arginine 682 is disordered.

The protein belongs to the LIMR family.

The protein resides in the cell membrane. Functionally, recruited to ligand-activated beta-2 adrenergic receptor/ADRB2, it negatively regulates the adrenergic receptor signaling pathway. May also regulate other G-protein coupled receptors including type-1 angiotensin II receptor/AGTR1. In Homo sapiens (Human), this protein is G-protein coupled receptor-associated protein LMBRD2.